The following is a 240-amino-acid chain: Phosphoribosylaminoimidazole-succinocarboxamide synthase (240 aa).

It belongs to the SAICAR synthetase family.

It carries out the reaction 5-amino-1-(5-phospho-D-ribosyl)imidazole-4-carboxylate + L-aspartate + ATP = (2S)-2-[5-amino-1-(5-phospho-beta-D-ribosyl)imidazole-4-carboxamido]succinate + ADP + phosphate + 2 H(+). It participates in purine metabolism; IMP biosynthesis via de novo pathway; 5-amino-1-(5-phospho-D-ribosyl)imidazole-4-carboxamide from 5-amino-1-(5-phospho-D-ribosyl)imidazole-4-carboxylate: step 1/2. This is Phosphoribosylaminoimidazole-succinocarboxamide synthase from Wolbachia sp. subsp. Brugia malayi (strain TRS).